Consider the following 584-residue polypeptide: Aspartate--tRNA(Asp/Asn) ligase (584 aa).

Glu-173 contacts L-aspartate. An aspartate region spans residues 197–200 (QLFK). L-aspartate is bound at residue Arg-219. ATP is bound by residues 219 to 221 (RDE) and Gln-228. His-447 is a binding site for L-aspartate. Glu-477 serves as a coordination point for ATP. Arg-484 serves as a coordination point for L-aspartate. 529 to 532 (GFDR) provides a ligand contact to ATP.

The protein belongs to the class-II aminoacyl-tRNA synthetase family. Type 1 subfamily. Homodimer.

It localises to the cytoplasm. The catalysed reaction is tRNA(Asx) + L-aspartate + ATP = L-aspartyl-tRNA(Asx) + AMP + diphosphate. In terms of biological role, aspartyl-tRNA synthetase with relaxed tRNA specificity since it is able to aspartylate not only its cognate tRNA(Asp) but also tRNA(Asn). Reaction proceeds in two steps: L-aspartate is first activated by ATP to form Asp-AMP and then transferred to the acceptor end of tRNA(Asp/Asn). The chain is Aspartate--tRNA(Asp/Asn) ligase from Campylobacter hominis (strain ATCC BAA-381 / DSM 21671 / CCUG 45161 / LMG 19568 / NCTC 13146 / CH001A).